A 458-amino-acid polypeptide reads, in one-letter code: Cysteine--tRNA ligase (458 aa).

Zn(2+) is bound at residue C28. Positions 30–40 (VTVYDLCHFGH) match the 'HIGH' region motif. Residues C209, H234, and E238 each contribute to the Zn(2+) site. The 'KMSKS' region motif lies at 266 to 270 (KMSKS). K269 lines the ATP pocket.

The protein belongs to the class-I aminoacyl-tRNA synthetase family. Monomer. Zn(2+) is required as a cofactor.

Its subcellular location is the cytoplasm. The enzyme catalyses tRNA(Cys) + L-cysteine + ATP = L-cysteinyl-tRNA(Cys) + AMP + diphosphate. In Mannheimia succiniciproducens (strain KCTC 0769BP / MBEL55E), this protein is Cysteine--tRNA ligase.